The following is a 180-amino-acid chain: Acireductone dioxygenase (180 aa).

Positions 88, 90, 94, and 133 each coordinate Fe(2+). Ni(2+)-binding residues include histidine 88, histidine 90, glutamate 94, and histidine 133.

This sequence belongs to the acireductone dioxygenase (ARD) family. In terms of assembly, monomer. Interacts with MMP14. Requires Fe(2+) as cofactor. The cofactor is Ni(2+).

The protein localises to the cytoplasm. The protein resides in the nucleus. Its subcellular location is the cell membrane. The catalysed reaction is 1,2-dihydroxy-5-(methylsulfanyl)pent-1-en-3-one + O2 = 4-methylsulfanyl-2-oxobutanoate + formate + 2 H(+). The enzyme catalyses 1,2-dihydroxy-5-(methylsulfanyl)pent-1-en-3-one + O2 = 3-(methylsulfanyl)propanoate + CO + formate + 2 H(+). Its pathway is amino-acid biosynthesis; L-methionine biosynthesis via salvage pathway; L-methionine from S-methyl-5-thio-alpha-D-ribose 1-phosphate: step 5/6. Functionally, catalyzes 2 different reactions between oxygen and the acireductone 1,2-dihydroxy-3-keto-5-methylthiopentene (DHK-MTPene) depending upon the metal bound in the active site. Fe-containing acireductone dioxygenase (Fe-ARD) produces formate and 2-keto-4-methylthiobutyrate (KMTB), the alpha-ketoacid precursor of methionine in the methionine recycle pathway. Ni-containing acireductone dioxygenase (Ni-ARD) produces methylthiopropionate, carbon monoxide and formate, and does not lie on the methionine recycle pathway. The sequence is that of Acireductone dioxygenase from Gallus gallus (Chicken).